The chain runs to 825 residues: Endoglucanase C (825 aa).

A signal peptide spans 1-28; that stretch reads MRNKLRRLLAIMMAVLLITSLFAPMVSA. The active-site Proton donor is glutamate 219. Glutamate 335 (nucleophile) is an active-site residue. The span at 607 to 621 shows a compositional bias: basic and acidic residues; the sequence is DRESVPEPVEHDTKG. Positions 607–635 are disordered; it reads DRESVPEPVEHDTKGDSALPSDFEDGTRQ.

It belongs to the glycosyl hydrolase 5 (cellulase A) family.

The catalysed reaction is Endohydrolysis of (1-&gt;4)-beta-D-glucosidic linkages in cellulose, lichenin and cereal beta-D-glucans.. In Evansella cellulosilytica (strain ATCC 21833 / DSM 2522 / FERM P-1141 / JCM 9156 / N-4) (Bacillus cellulosilyticus), this protein is Endoglucanase C (celC).